The sequence spans 148 residues: Large ribosomal subunit protein bL9 (148 aa).

It belongs to the bacterial ribosomal protein bL9 family.

In terms of biological role, binds to the 23S rRNA. This is Large ribosomal subunit protein bL9 from Thermobifida fusca (strain YX).